A 188-amino-acid polypeptide reads, in one-letter code: MSMPTMTLVNQLLIALPSMPDPHFARGVALICQHDSNGAMGVVLNRPSEYTLGEVLFQMGIETASETLREQVVLAGGPVHPDRGFVIYDSEHVWGPSLLIGDGLYLTTSRDVLAAMAEGSGPSRALVALGCAGWAAGQLELELVENNWLMVPADASLLFDTALEQRWQRAAGRIGVDLFRLTDYTGHA.

It belongs to the UPF0301 (AlgH) family.

The chain is UPF0301 protein PD_1276 from Xylella fastidiosa (strain Temecula1 / ATCC 700964).